A 207-amino-acid polypeptide reads, in one-letter code: Large ribosomal subunit protein uL4 (207 aa).

Residues 54-76 (RSAVRGGGRKPWRQKGTGRARQG) are disordered. Residues 60–71 (GGRKPWRQKGTG) are compositionally biased toward basic residues.

Belongs to the universal ribosomal protein uL4 family. In terms of assembly, part of the 50S ribosomal subunit.

Functionally, one of the primary rRNA binding proteins, this protein initially binds near the 5'-end of the 23S rRNA. It is important during the early stages of 50S assembly. It makes multiple contacts with different domains of the 23S rRNA in the assembled 50S subunit and ribosome. Its function is as follows. Forms part of the polypeptide exit tunnel. The polypeptide is Large ribosomal subunit protein uL4 (Staphylococcus haemolyticus (strain JCSC1435)).